The chain runs to 998 residues: GGFMSQDHTGYENDEGYESDIDEKTQEQAAPAQPTLDTADDGFSFTPASSTQSTPAISTLSGTISTDDQISDPITKAVREIIIQQQKDEIAEQILKDLAALVDRDLAEQKRKEIEEEKEKDKKLSVFFGNPANREFIDNALEKPELKKKLESIEITGYKNILLTYSAANGYHGGFKPVQWENQISASDLRATVVKNDAGDELCTLNETTVKTKPFTVAKKDGTQVQINSYRAIDFPIKLDKADGSMHLSMVALKADGTKPSKDRAVYFTAHYEEGPNGKPQLKEISSPQPLKFAGDGPDAVAYIEHGGEIYTLAVTRGKYKEMMKEVELHQGQSVDLSQIIAEDLTKVQGRSQETLQPIITPNQELKSSIETPTTTQVPPITPASQPVHTETSQMPQSQQVNPNLFNAATALSCSMQDLLNYVNAGLTKEKDGNTQIDLINEAATAILNNEKEKQANFITLTKNMVNNNALTPDTKVARVNAVLETIKNNQDTPDIEKSKMLEATVAITLNSENLTPKQKQQMLEKAVDVDLSFKDDTSRAVAIDGITGAVIKSNLSTKDKGTMLIAVGDKVNASELSNAEKQQLLGSVLKKGVETKILSPEQQQLMQQNLDKITAEQTKNDNITEVQGILANPAFNTIAKTAAIQKVTTKVLDSPITAEIKGETLESITKIVAESPLNVQDKTDIVKGMGEAIASHRTMAPTKKIAAIESVETGVAKSITDLEDKKLMTKGLVDGIYEDKANPEITSEMMKAVSKGVDNSTAIPEDKQALKDAASEAALDRATQNFTEGLKGQNLDEPKPRDDIYNKAQDIAYALKNVVTTVLDANPEKREVSEEEVMNKTSSILNDISKIAIEKVNNLRAMLSPDSNLKTLEEKKAEATKKVDELVKEFGTKSSTEEQQSFIQANLIDDKTLSKEVRLQTIDKLLQEQAQKRAEAIKNPNVKTEDLRVVSGQSALKPISNDEPDIEKTKMVVGRDRVNIKDNIKIMGALMNARDSI.

Positions 1–69 (GGFMSQDHTG…LSGTISTDDQ (69 aa)) are disordered. The span at 12-21 (ENDEGYESDI) shows a compositional bias: acidic residues. A compositionally biased stretch (polar residues) spans 46-68 (TPASSTQSTPAISTLSGTISTDD).

The protein localises to the cytoplasm. The chain is Antigenic heat-stable 120 kDa protein (sca4) from Rickettsia akari.